The sequence spans 329 residues: tRNA (cytidine(32)/guanosine(34)-2'-O)-methyltransferase (329 aa).

G53, W55, D75, D91, and D116 together coordinate S-adenosyl-L-methionine. K156 serves as the catalytic Proton acceptor. The tract at residues 221–240 is required for binding to WDR6; sequence DFNQLDGPTRIIVPFVTCGD. S271 is subject to Phosphoserine.

Belongs to the class I-like SAM-binding methyltransferase superfamily. RNA methyltransferase RlmE family. TRM7 subfamily. Interacts with WDR6; the interaction is direct, and required for 2'-O-methylation of position 34 in substrate tRNAs. Found in fetal brain, lung, liver and kidney. Widely expressed in adult tissue; with high expression in heart and liver, lower expression in skeletal muscle, kidney, and pancreas and also lowly expressed in brain and lung. In the adult brain, expressed in amygdala, caudate nucleus, corpus callosum, hippocampus and thalamus.

Its subcellular location is the cytoplasm. It is found in the nucleus. The enzyme catalyses cytidine(32)/guanosine(34) in tRNA + 2 S-adenosyl-L-methionine = 2'-O-methylcytidine(32)/2'-O-methylguanosine(34) in tRNA + 2 S-adenosyl-L-homocysteine + 2 H(+). Its activity is regulated as follows. Inhibited by 2,6-diaminopurine (DAP); inhibition promotes UGA stop-codon readthrough during translation by misincorporation of tRNA(Trp) in the nascent polypeptide. Its function is as follows. Methylates the 2'-O-ribose of nucleotides at positions 32 and 34 of the tRNA anticodon loop of substrate tRNAs. Requisite for faithful cytoplasmic translation. Requires THADA for methylation of the nucleotide at position 32 of the anticodon loop of substrate tRNAs. Requires WDR6 for methylation of the nucleotide at position 34 of the anticodon loop of substrate tRNAs. Promotes translation efficiency of the UUU codon. Plays a role in neurogenesis. Required for expression of genes involved in neurogenesis, mitochondrial translation and energy generation, and lipid biosynthesis. Requisite for RNA-mediated gene silencing. May modify position 32 in tRNA(Arg(ACG)), tRNA(Arg(CCG)), tRNA(Arg(UCG)), tRNA(Cys(GCA)), tRNA(Cys(ACA)), tRNA(Gln(CUG)), tRNA(Gln(UUG)), tRNA(Gly(CCC)), tRNA(Leu(CAG))/tRNA(Leu(CAA)), tRNA(Leu(A/IAG)), tRNA(Leu(UAG)), tRNA(Phe(GAA)), tRNA(Pro(AGG))/tRNA(Pro(CGG))/tRNA(Pro(UGG)) and tRNA(Trp(CCA)), and position 34 in tRNA(Phe(GAA)), tRNA(Leu(CAA)), tRNA(Sec(UCA)), and tRNA(Trp(CCA)). The sequence is that of tRNA (cytidine(32)/guanosine(34)-2'-O)-methyltransferase from Homo sapiens (Human).